The chain runs to 230 residues: Translation initiation factor IF-3 (230 aa).

2 disordered regions span residues 1-21 (MAIQ…RTNR) and 184-230 (LQSQ…AAQR). The segment covering 193–208 (AAAAAAPAAAPAAGAP) has biased composition (low complexity). The span at 209 to 220 (APAPAPAAPAPA) shows a compositional bias: pro residues. The segment covering 221 to 230 (PTAADPAAQR) has biased composition (low complexity).

The protein belongs to the IF-3 family. In terms of assembly, monomer.

It is found in the cytoplasm. Its function is as follows. IF-3 binds to the 30S ribosomal subunit and shifts the equilibrium between 70S ribosomes and their 50S and 30S subunits in favor of the free subunits, thus enhancing the availability of 30S subunits on which protein synthesis initiation begins. The chain is Translation initiation factor IF-3 from Anaeromyxobacter dehalogenans (strain 2CP-1 / ATCC BAA-258).